A 77-amino-acid polypeptide reads, in one-letter code: Acyl carrier protein (77 aa).

Positions 2 to 77 (SDVADRVKKI…DAVKFISEAS (76 aa)) constitute a Carrier domain. The residue at position 37 (serine 37) is an O-(pantetheine 4'-phosphoryl)serine.

The protein belongs to the acyl carrier protein (ACP) family. In terms of processing, 4'-phosphopantetheine is transferred from CoA to a specific serine of apo-ACP by AcpS. This modification is essential for activity because fatty acids are bound in thioester linkage to the sulfhydryl of the prosthetic group.

The protein localises to the cytoplasm. It participates in lipid metabolism; fatty acid biosynthesis. Carrier of the growing fatty acid chain in fatty acid biosynthesis. This chain is Acyl carrier protein, found in Ruegeria pomeroyi (strain ATCC 700808 / DSM 15171 / DSS-3) (Silicibacter pomeroyi).